The sequence spans 1271 residues: Probable WRKY transcription factor protein 1 (1271 aa).

A compositionally biased stretch (polar residues) spans methionine 1–tyrosine 12. 3 disordered regions span residues methionine 1 to arginine 138, asparagine 204 to glycine 312, and asparagine 370 to serine 515. A coiled-coil region spans residues leucine 9–asparagine 71. Low complexity-rich tracts occupy residues asparagine 13 to asparagine 103, isoleucine 116 to asparagine 135, asparagine 204 to asparagine 216, and serine 223 to asparagine 259. Positions asparagine 260–glutamate 274 are enriched in acidic residues. Polar residues predominate over residues serine 297 to glycine 312. The stretch at lysine 320 to asparagine 372 forms a coiled coil. Positions asparagine 370–threonine 388 are enriched in low complexity. The segment covering asparagine 413–phenylalanine 442 has biased composition (acidic residues). Positions glutamate 443–lysine 458 are enriched in low complexity. Positions glutamate 475–asparagine 487 are enriched in basic and acidic residues. The span at glutamine 488–serine 515 shows a compositional bias: polar residues. Residues leucine 520–glutamate 574 are a coiled coil. Positions asparagine 578–proline 587 are enriched in basic and acidic residues. Disordered stretches follow at residues asparagine 578 to leucine 650 and serine 667 to asparagine 811. Positions asparagine 610–asparagine 642 are enriched in low complexity. Polar residues predominate over residues asparagine 672 to alanine 702. Low complexity-rich tracts occupy residues threonine 703–proline 715, asparagine 725–asparagine 766, and asparagine 774–asparagine 811. Positions asparagine 766–asparagine 786 form a coiled coil. The WRKY 1 DNA-binding region spans asparagine 808 to proline 872. Zn(2+)-binding residues include cysteine 839, cysteine 844, histidine 867, and histidine 869. Positions phenylalanine 890–glycine 1095 are disordered. Residues glycine 895–glycine 918 are compositionally biased toward low complexity. Residues asparagine 919 to asparagine 937 are compositionally biased toward gly residues. The segment covering serine 938–serine 956 has biased composition (low complexity). Positions proline 957–methionine 966 are enriched in polar residues. A compositionally biased stretch (low complexity) spans asparagine 967–lysine 995. The segment covering serine 998–threonine 1010 has biased composition (basic and acidic residues). The span at threonine 1011–aspartate 1021 shows a compositional bias: acidic residues. A coiled-coil region spans residues aspartate 1013–asparagine 1040. Positions asparagine 1025–asparagine 1085 are enriched in low complexity. A DNA-binding region (WRKY 2) is located at residues serine 1105–proline 1167. Residues cysteine 1136, cysteine 1141, histidine 1162, and histidine 1164 each coordinate Zn(2+). Residues asparagine 1180–asparagine 1210 form a disordered region. Residues asparagine 1184–asparagine 1210 show a composition bias toward low complexity.

The protein belongs to the WRKY group I family.

The protein resides in the nucleus. Its function is as follows. Probable transcription factor. Interacts specifically with the W box (5'-(T)TGAC[CT]-3'), a frequently occurring elicitor-responsive cis-acting element. In Dictyostelium discoideum (Social amoeba), this protein is Probable WRKY transcription factor protein 1 (wrky1).